A 231-amino-acid polypeptide reads, in one-letter code: 5'-methylthioadenosine/S-adenosylhomocysteine nucleosidase (231 aa).

The Proton acceptor role is filled by Glu-12. Substrate is bound by residues Gly-78, Met-153, and 174–175 (ME). Asp-198 functions as the Proton donor in the catalytic mechanism.

Belongs to the PNP/UDP phosphorylase family. MtnN subfamily.

It carries out the reaction S-adenosyl-L-homocysteine + H2O = S-(5-deoxy-D-ribos-5-yl)-L-homocysteine + adenine. The enzyme catalyses S-methyl-5'-thioadenosine + H2O = 5-(methylsulfanyl)-D-ribose + adenine. It catalyses the reaction 5'-deoxyadenosine + H2O = 5-deoxy-D-ribose + adenine. It functions in the pathway amino-acid biosynthesis; L-methionine biosynthesis via salvage pathway; S-methyl-5-thio-alpha-D-ribose 1-phosphate from S-methyl-5'-thioadenosine (hydrolase route): step 1/2. Functionally, catalyzes the irreversible cleavage of the glycosidic bond in both 5'-methylthioadenosine (MTA) and S-adenosylhomocysteine (SAH/AdoHcy) to adenine and the corresponding thioribose, 5'-methylthioribose and S-ribosylhomocysteine, respectively. Also cleaves 5'-deoxyadenosine, a toxic by-product of radical S-adenosylmethionine (SAM) enzymes, into 5-deoxyribose and adenine. The chain is 5'-methylthioadenosine/S-adenosylhomocysteine nucleosidase from Bacillus cereus (strain G9842).